The chain runs to 899 residues: Solute carrier family 12 member 9 (899 aa).

The Cytoplasmic segment spans residues 1-42 (MANEHSPLLVHGVYSMMGNAEDSRGGSAGTGEASNPKTDPRK). Residues 43–63 (LNTFFGVMVPTILSMFSIVLF) form a helical membrane-spanning segment. The Extracellular segment spans residues 64 to 78 (LRTGFVVGHAGLLHG). A helical membrane pass occupies residues 79–99 (LLMLFVAYFIISLTILSICAI). Over 100–125 (STNGAVEGGGAYFMISRSLGPEFGGS) the chain is Cytoplasmic. The chain crosses the membrane as a helical span at residues 126-146 (IGLMFYLAKVCACGVYVLGLV). Topologically, residues 147 to 175 (EAIMDVFGQDPGSSVAQGLRVLPQGYWYT) are extracellular. A helical transmembrane segment spans residues 176 to 196 (VLYSSVVLLLCMLVCLVGAHI). Residues 197 to 201 (YAKAS) lie on the Cytoplasmic side of the membrane. The helical transmembrane segment at 202 to 222 (FLILLVVTVSLISIIISPLIV) threads the bilayer. The Extracellular portion of the chain corresponds to 223–269 (SPQGFNITHTYGNNHSVTVSPSYTGFNSTTLKNNLGPRYSLDYSTNT). N-linked (GlcNAc...) asparagine glycans are attached at residues N228, N236, and N249. The chain crosses the membrane as a helical span at residues 270-290 (MMSFATVFAVMFTSCTGIMAG). At 291–306 (ANMSGELKNPSESIPK) the chain is on the cytoplasmic side. A helical membrane pass occupies residues 307-327 (GTIMAVAYTFTVYVLLYLLLS). The Extracellular segment spans residues 328-350 (STCDRSLLLNDYAVFQRVNVWPP). The chain crosses the membrane as a helical span at residues 351–371 (FVTIGVYCASLSAAMCSMIGA). At 372-373 (SR) the chain is on the cytoplasmic side. The chain crosses the membrane as a helical span at residues 374-394 (ILHALALDQLFGLPLAPAAVT). Residues 395–399 (SSSGN) are Extracellular-facing. The helical transmembrane segment at 400-420 (PWVSVLYTWALVQCTLFAGQL) threads the bilayer. Residue N421 is a topological domain, cytoplasmic. The chain crosses the membrane as a helical span at residues 422–442 (VIAGIVTVFYLLAYAAVDLAC). At 443–455 (LALEWASAPNFRP) the chain is on the extracellular side. The chain crosses the membrane as a helical span at residues 456-476 (TFQFFSWHTCLLGIISCVVMM). The Extracellular segment spans residues 477–487 (FVINPVYSSAS). Residues 488–510 (IVLLLLLLLFLHYRSPTSSWGYI) traverse the membrane as a helical segment. The Cytoplasmic portion of the chain corresponds to 511-563 (SQALIFHQVRKYLLMLDSRKDHVKFWRPQVLLMVSNPRSSCQLICFVNQLKKG). A helical transmembrane segment spans residues 564–584 (GLFVLGHVQIGDLDVLPADPV). At 585–749 (QPQYNFWLSL…NLLTPGSASY (165 aa)) the chain is on the extracellular side. The helical transmembrane segment at 750-770 (ADVGSLFLLQMACVLNMASGW) threads the bilayer. The Cytoplasmic segment spans residues 771–899 (RRARLRIFVC…GVTPVTCTEL (129 aa)).

The protein belongs to the SLC12A transporter family.

The protein localises to the cell membrane. The protein resides in the lysosome membrane. In terms of biological role, seems to correspond to a subunit of a multimeric transport system and thus, additional subunits may be required for its function. May play a role in lysosomal ion flux and osmoregulation. In Danio rerio (Zebrafish), this protein is Solute carrier family 12 member 9 (slc12a9).